The following is a 145-amino-acid chain: UPF0179 protein Maeo_1037 (145 aa).

Belongs to the UPF0179 family.

This is UPF0179 protein Maeo_1037 from Methanococcus aeolicus (strain ATCC BAA-1280 / DSM 17508 / OCM 812 / Nankai-3).